A 146-amino-acid polypeptide reads, in one-letter code: D-aminoacyl-tRNA deacylase (146 aa).

A Gly-cisPro motif, important for rejection of L-amino acids motif is present at residues 138–139 (GP).

Belongs to the DTD family. As to quaternary structure, homodimer.

It is found in the cytoplasm. The enzyme catalyses glycyl-tRNA(Ala) + H2O = tRNA(Ala) + glycine + H(+). The catalysed reaction is a D-aminoacyl-tRNA + H2O = a tRNA + a D-alpha-amino acid + H(+). In terms of biological role, an aminoacyl-tRNA editing enzyme that deacylates mischarged D-aminoacyl-tRNAs. Also deacylates mischarged glycyl-tRNA(Ala), protecting cells against glycine mischarging by AlaRS. Acts via tRNA-based rather than protein-based catalysis; rejects L-amino acids rather than detecting D-amino acids in the active site. By recycling D-aminoacyl-tRNA to D-amino acids and free tRNA molecules, this enzyme counteracts the toxicity associated with the formation of D-aminoacyl-tRNA entities in vivo and helps enforce protein L-homochirality. The polypeptide is D-aminoacyl-tRNA deacylase (Stenotrophomonas maltophilia (strain R551-3)).